The following is a 287-amino-acid chain: Glycine--tRNA ligase alpha subunit (287 aa).

Belongs to the class-II aminoacyl-tRNA synthetase family. In terms of assembly, tetramer of two alpha and two beta subunits.

The protein resides in the cytoplasm. The catalysed reaction is tRNA(Gly) + glycine + ATP = glycyl-tRNA(Gly) + AMP + diphosphate. This is Glycine--tRNA ligase alpha subunit from Campylobacter jejuni subsp. jejuni serotype O:23/36 (strain 81-176).